A 1236-amino-acid chain; its full sequence is ATP-dependent helicase/nuclease subunit A (1236 aa).

The 470-residue stretch at 4–473 (VKWTKEQQQA…VNLFKNFRSR (470 aa)) folds into the UvrD-like helicase ATP-binding domain. 25 to 32 (AAAGSGKT) serves as a coordination point for ATP. One can recognise a UvrD-like helicase C-terminal domain in the interval 512 to 806 (YEDKSLVGGP…RIMSIHKSKG (295 aa)).

The protein belongs to the helicase family. AddA subfamily. As to quaternary structure, heterodimer of AddA and AddB/RexB. It depends on Mg(2+) as a cofactor.

It catalyses the reaction Couples ATP hydrolysis with the unwinding of duplex DNA by translocating in the 3'-5' direction.. It carries out the reaction ATP + H2O = ADP + phosphate + H(+). Functionally, the heterodimer acts as both an ATP-dependent DNA helicase and an ATP-dependent, dual-direction single-stranded exonuclease. Recognizes the chi site generating a DNA molecule suitable for the initiation of homologous recombination. The AddA nuclease domain is required for chi fragment generation; this subunit has the helicase and 3' -&gt; 5' nuclease activities. This Clostridium novyi (strain NT) protein is ATP-dependent helicase/nuclease subunit A.